Here is a 388-residue protein sequence, read N- to C-terminus: Lipoyl synthase, mitochondrial (388 aa).

The transit peptide at 1 to 18 directs the protein to the mitochondrion; the sequence is MRLTTVQRRFLVSTKAKV. Residues 22–39 are compositionally biased toward low complexity; sequence SISSTANTGSASAGAPNG. Residues 22–43 form a disordered region; it reads SISSTANTGSASAGAPNGQTRR. [4Fe-4S] cluster contacts are provided by cysteine 120, cysteine 125, cysteine 131, cysteine 151, cysteine 155, cysteine 158, and serine 366. Residues 134–355 enclose the Radical SAM core domain; it reads GKDKSKATAT…KDKAKEMGFL (222 aa).

It belongs to the radical SAM superfamily. Lipoyl synthase family. [4Fe-4S] cluster serves as cofactor.

It localises to the mitochondrion. The enzyme catalyses [[Fe-S] cluster scaffold protein carrying a second [4Fe-4S](2+) cluster] + N(6)-octanoyl-L-lysyl-[protein] + 2 oxidized [2Fe-2S]-[ferredoxin] + 2 S-adenosyl-L-methionine + 4 H(+) = [[Fe-S] cluster scaffold protein] + N(6)-[(R)-dihydrolipoyl]-L-lysyl-[protein] + 4 Fe(3+) + 2 hydrogen sulfide + 2 5'-deoxyadenosine + 2 L-methionine + 2 reduced [2Fe-2S]-[ferredoxin]. Its pathway is protein modification; protein lipoylation via endogenous pathway; protein N(6)-(lipoyl)lysine from octanoyl-[acyl-carrier-protein]: step 2/2. In terms of biological role, catalyzes the radical-mediated insertion of two sulfur atoms into the C-6 and C-8 positions of the octanoyl moiety bound to the lipoyl domains of lipoate-dependent enzymes, thereby converting the octanoylated domains into lipoylated derivatives. The polypeptide is Lipoyl synthase, mitochondrial (Candida glabrata (strain ATCC 2001 / BCRC 20586 / JCM 3761 / NBRC 0622 / NRRL Y-65 / CBS 138) (Yeast)).